A 127-amino-acid polypeptide reads, in one-letter code: uncharacterized protein (127 aa).

This is an uncharacterized protein from Rickettsia conorii (strain ATCC VR-613 / Malish 7).